A 205-amino-acid polypeptide reads, in one-letter code: Protein N-terminal glutamine amidohydrolase (205 aa).

Catalysis depends on residues Cys-20, His-74, and Asp-90.

It belongs to the NTAQ1 family. Monomer.

The enzyme catalyses N-terminal L-glutaminyl-[protein] + H2O = N-terminal L-glutamyl-[protein] + NH4(+). Mediates the side-chain deamidation of N-terminal glutamine residues to glutamate, an important step in N-end rule pathway of protein degradation. Conversion of the resulting N-terminal glutamine to glutamate renders the protein susceptible to arginylation, polyubiquitination and degradation as specified by the N-end rule. Does not act on substrates with internal or C-terminal glutamine and does not act on non-glutamine residues in any position. The polypeptide is Protein N-terminal glutamine amidohydrolase (tun) (Drosophila grimshawi (Hawaiian fruit fly)).